The sequence spans 266 residues: Integral membrane protein 2B (266 aa).

At 1–54 (MVKVTFNSALAQKEAKKDEPKSGEEALIIPPDAVAVDCKDPDDVVPVGQRRAWC) the chain is on the cytoplasmic side. Residues 55–75 (WCMCFGLAFMLAGVILGGAYL) traverse the membrane as a helical; Signal-anchor for type II membrane protein segment. At 76 to 266 (YKYFALQPDD…KFAVETLICS (191 aa)) the chain is on the lumenal side. The interval 102-134 (EPSADAPAALYQTIEENIKIFEEEEVEFISVPV) is necessary for interaction with APP and inhibitor effects on APP processing. A BRICHOS domain is found at 137-231 (FADSDPANIV…LCHDKETYKL (95 aa)). Disulfide bonds link Cys-164–Cys-223 and Cys-248–Cys-265. N-linked (GlcNAc...) asparagine glycosylation occurs at Asn-170.

The protein belongs to the ITM2 family. As to quaternary structure, homodimer; disulfide-linked. Interacts with SPPL2A and SPPL2B. Interacts with APP. Mature BRI2 (mBRI2) interacts with the APP amyloid-beta A4 protein; the interaction occurs at the cell surface and in the endocytic compartments and enable alpha- and beta-secretase-induced APP cleavage inhibition. Mature BRI2 (mBRI2) interacts with the APP C99; the interaction occurs in the endocytic compartments and enable gamma-secretase-induced C99 cleavage inhibition. May form heterodimers with Bri23 peptide and APP amyloid-beta protein 40. Interacts with ADAM7 in sperm; the interaction increases following capacitation. The ectodomain C-terminal part of the imBRI2 is processed by furin producing a secreted Bri23 peptide and a mature BRI2, membrane form (mBRI2). The remaining part of the ectodomain of mBRI2 containing the BRICHOS domain is cleaved by ADAM10 and is secreted (BRI2C, soluble form). The membrane-bound N-terminal fragment (BRI2C, membrane form) is further proteolytically processed by SPPL2A and SPPL2B through regulated intramembrane proteolysis producing a secreted C-peptide and a BRI2 intracellular domain (BRI2 ICD) released in the cytosol. Shedding by ADAM10 facilitates intramembrane cleavage but is not absolutely required for BRI2 ICD generation. In terms of processing, glycosylation at Asn-170 is important for cell surface localization, but doesn't affect furin- and ADAM10-induced proteolytic processing. As to expression, ubiquitous. Expressed in brain.

The protein resides in the golgi apparatus membrane. It is found in the cell membrane. Its subcellular location is the endosome membrane. It localises to the secreted. Its function is as follows. Plays a regulatory role in the processing of the amyloid-beta A4 precursor protein (APP) and acts as an inhibitor of the amyloid-beta peptide aggregation and fibrils deposition. Plays a role in the induction of neurite outgrowth. Functions as a protease inhibitor by blocking access of secretases to APP cleavage sites. Mature BRI2 (mBRI2) functions as a modulator of the amyloid-beta A4 precursor protein (APP) processing leading to a strong reduction in the secretion of secretase-processed amyloid-beta protein 40 and amyloid-beta protein 42. Functionally, bri23 peptide prevents aggregation of APP amyloid-beta protein 42 into toxic oligomers. The chain is Integral membrane protein 2B (ITM2B) from Homo sapiens (Human).